We begin with the raw amino-acid sequence, 379 residues long: Adenylosuccinate synthetase (379 aa).

Residues 11-17 (GDEGKGK) and 39-41 (GHT) contribute to the GTP site. The active-site Proton acceptor is aspartate 12. The Mg(2+) site is built by aspartate 12 and glycine 39. IMP is bound by residues 12–15 (DEGK), 37–40 (NAGH), threonine 127, arginine 141, glutamine 223, threonine 238, and arginine 302. Histidine 40 (proton donor) is an active-site residue. 298–304 (TTTGRGR) lines the substrate pocket. Residues arginine 304 and 330-332 (KLD) contribute to the GTP site.

Belongs to the adenylosuccinate synthetase family. In terms of assembly, homodimer. It depends on Mg(2+) as a cofactor.

Its subcellular location is the cytoplasm. The enzyme catalyses IMP + L-aspartate + GTP = N(6)-(1,2-dicarboxyethyl)-AMP + GDP + phosphate + 2 H(+). It functions in the pathway purine metabolism; AMP biosynthesis via de novo pathway; AMP from IMP: step 1/2. Its function is as follows. Plays an important role in the de novo pathway of purine nucleotide biosynthesis. Catalyzes the first committed step in the biosynthesis of AMP from IMP. The polypeptide is Adenylosuccinate synthetase (Methanosarcina mazei (strain ATCC BAA-159 / DSM 3647 / Goe1 / Go1 / JCM 11833 / OCM 88) (Methanosarcina frisia)).